Consider the following 333-residue polypeptide: DNA-directed RNA polymerase subunit alpha (333 aa).

An alpha N-terminal domain (alpha-NTD) region spans residues 1–234 (MQISVNEFLT…QQLAAFVDLK (234 aa)). Residues 248–333 (IDPILLRPVD…SLKKDDKATA (86 aa)) are alpha C-terminal domain (alpha-CTD).

The protein belongs to the RNA polymerase alpha chain family. In terms of assembly, homodimer. The RNAP catalytic core consists of 2 alpha, 1 beta, 1 beta' and 1 omega subunit. When a sigma factor is associated with the core the holoenzyme is formed, which can initiate transcription.

The enzyme catalyses RNA(n) + a ribonucleoside 5'-triphosphate = RNA(n+1) + diphosphate. In terms of biological role, DNA-dependent RNA polymerase catalyzes the transcription of DNA into RNA using the four ribonucleoside triphosphates as substrates. This is DNA-directed RNA polymerase subunit alpha from Pseudomonas syringae pv. tomato (strain ATCC BAA-871 / DC3000).